The primary structure comprises 121 residues: Huntingtin-interacting protein K (121 aa).

The span at 1–13 (MATEGDVELELET) shows a compositional bias: acidic residues. The interval 1 to 75 (MATEGDVELE…EQKAKQEREK (75 aa)) is disordered. Basic and acidic residues-rich tracts occupy residues 20–47 (RPPE…EKEI) and 60–75 (GDRR…EREK). Position 30 is a phosphoserine (S30). Residues 52 to 121 (LETAMSVIGD…VVEALIALTN (70 aa)) are required for association with the NAA10-NAA15 complex. Residues 62 to 107 (RRSREQKAKQEREKELAKVTIKKEDLELIMTEMEISRAAAERSLRE) are a coiled coil.

As to quaternary structure, component of the N-terminal acetyltransferase A (NatA)/HYPK complex at least composed of NAA10, NAA15 and HYPK, which has N-terminal acetyltransferase activity. Within the complex interacts with NAA10. Within the complex interacts with NAA15. Predominantly interacts with NAA15 in the NAA10-NAA15 complex (also called the NatA complex); the interaction with the NatA complex reduces the acetylation activity of the NatA complex. Interacts with HTT (via N-terminus). The NatA complex is required for HYPK stability and for reducing polyQ aggregation of HTT. Component of the N-terminal acetyltransferase E (NatE)/HYPK complex at least composed of NAA10, NAA15, NAA50 and HYPK. Within the complex interacts with NAA10 and NAA15. Does not interact with NAA50. Interaction with NAA15 reduces the capacity of NAA15 to interact with NAA50. Its capacity to interact with the NatA complex is reduced by NAA50. Does not interact with the N-terminal acetyltransferase B (NatB) complex component NAA25 or the N-terminal acetyltransferase C (NatC) complex component NAA35.

It localises to the nucleus. The protein resides in the cytoplasm. Functionally, component of several N-terminal acetyltransferase complexes. Inhibits the N-terminal acetylation activity of the N-terminal acetyltransferase NAA10-NAA15 complex (also called the NatA complex). Has chaperone-like activity preventing polyglutamine (polyQ) aggregation of HTT in neuronal cells probably while associated with the NatA complex. May play a role in the NatA complex-mediated N-terminal acetylation of PCNP. The polypeptide is Huntingtin-interacting protein K (Homo sapiens (Human)).